Consider the following 476-residue polypeptide: Aspartyl/glutamyl-tRNA(Asn/Gln) amidotransferase subunit B (476 aa).

Belongs to the GatB/GatE family. GatB subfamily. Heterotrimer of A, B and C subunits.

It carries out the reaction L-glutamyl-tRNA(Gln) + L-glutamine + ATP + H2O = L-glutaminyl-tRNA(Gln) + L-glutamate + ADP + phosphate + H(+). The catalysed reaction is L-aspartyl-tRNA(Asn) + L-glutamine + ATP + H2O = L-asparaginyl-tRNA(Asn) + L-glutamate + ADP + phosphate + 2 H(+). In terms of biological role, allows the formation of correctly charged Asn-tRNA(Asn) or Gln-tRNA(Gln) through the transamidation of misacylated Asp-tRNA(Asn) or Glu-tRNA(Gln) in organisms which lack either or both of asparaginyl-tRNA or glutaminyl-tRNA synthetases. The reaction takes place in the presence of glutamine and ATP through an activated phospho-Asp-tRNA(Asn) or phospho-Glu-tRNA(Gln). This chain is Aspartyl/glutamyl-tRNA(Asn/Gln) amidotransferase subunit B, found in Thermosipho melanesiensis (strain DSM 12029 / CIP 104789 / BI429).